A 93-amino-acid polypeptide reads, in one-letter code: DNA/RNA-binding protein Alba (93 aa).

Lys11 carries the N6-acetyllysine modification.

This sequence belongs to the histone-like Alba family. Post-translationally, acetylated. Acetylation at Lys-11 decreases DNA-binding affinity.

It localises to the cytoplasm. The protein resides in the chromosome. Binds double-stranded DNA tightly but without sequence specificity. Involved in DNA compaction. In Pyrococcus furiosus (strain ATCC 43587 / DSM 3638 / JCM 8422 / Vc1), this protein is DNA/RNA-binding protein Alba.